Reading from the N-terminus, the 322-residue chain is Retinal homeobox protein Rx-A (322 aa).

The short motif at 32–39 (HSIEAILG) is the Octapeptide motif element. The segment covering 75 to 87 (TEEIHPQQEHLED) has biased composition (basic and acidic residues). The segment at 75 to 136 (TEEIHPQQEH…KKKHRRNRTT (62 aa)) is disordered. Residues 100–117 (KTSSECLSPGLSTSNSDN) show a composition bias toward polar residues. Residues 130–189 (HRRNRTTFTTYQLHELERAFEKSHYPDVYSREELAMKVNLPEVRVQVWFQNRRAKWRRQE) constitute a DNA-binding region (homeobox). An OAR motif is present at residues 302-315 (NSIASLRMKAKEHI). The short motif at 308 to 312 (RMKAK) is the Nuclear localization signal element.

This sequence belongs to the paired homeobox family. Bicoid subfamily. As to expression, highly expressed in anterior neural plate followed by neural retina, pigmented epithelium, in pineal gland, diencephalon floor and epiphysis. At later stages, the neuroretina remains the primary site of expression. No expression in the developing lens and cornea.

It localises to the nucleus. Plays a critical role in eye formation by regulating the initial specification of retinal cells and/or their subsequent proliferation. The protein is Retinal homeobox protein Rx-A (rax-a) of Xenopus laevis (African clawed frog).